A 1010-amino-acid chain; its full sequence is Regulator of telomere elongation helicase 1 homolog (1010 aa).

Residues Asn7 to Thr333 enclose the Helicase ATP-binding domain. ATP is bound at residue Ser42–Thr49. 4 residues coordinate [4Fe-4S] cluster: Cys157, Cys175, Cys184, and Cys220. The DEAH box motif lies at Asp263–His266. Residues Thr912–Glu931 form a disordered region. Basic and acidic residues predominate over residues Pro918–Glu931.

The protein belongs to the helicase family. RAD3/XPD subfamily.

It is found in the nucleus. It catalyses the reaction ATP + H2O = ADP + phosphate + H(+). Its function is as follows. A probable ATP-dependent DNA helicase implicated in DNA repair and the maintenance of genomic stability. Acts as an anti-recombinase to counteract toxic recombination and limit crossover during meiosis. Regulates meiotic recombination and crossover homeostasis by physically dissociating strand invasion events and thereby promotes noncrossover repair by meiotic synthesis dependent strand annealing (SDSA) as well as disassembly of D loop recombination intermediates. The chain is Regulator of telomere elongation helicase 1 homolog from Aedes aegypti (Yellowfever mosquito).